The chain runs to 623 residues: Dictomallein-5 (623 aa).

The signal sequence occupies residues 1-21; it reads MKIFIIKIILVLFNYVLLSYS. Positions 174–435 constitute a Peptidase M66 domain; that stretch reads PNVGQDYTLK…QNYFKNSIYY (262 aa). H327 provides a ligand contact to Zn(2+). The active site involves E328. Residues H331 and H337 each coordinate Zn(2+).

The protein belongs to the dictomallein family. It depends on Zn(2+) as a cofactor.

The protein localises to the secreted. The polypeptide is Dictomallein-5 (dtmlE) (Dictyostelium discoideum (Social amoeba)).